The primary structure comprises 347 residues: S-adenosylmethionine:tRNA ribosyltransferase-isomerase (347 aa).

This sequence belongs to the QueA family. In terms of assembly, monomer.

It localises to the cytoplasm. It carries out the reaction 7-aminomethyl-7-carbaguanosine(34) in tRNA + S-adenosyl-L-methionine = epoxyqueuosine(34) in tRNA + adenine + L-methionine + 2 H(+). It participates in tRNA modification; tRNA-queuosine biosynthesis. Transfers and isomerizes the ribose moiety from AdoMet to the 7-aminomethyl group of 7-deazaguanine (preQ1-tRNA) to give epoxyqueuosine (oQ-tRNA). The polypeptide is S-adenosylmethionine:tRNA ribosyltransferase-isomerase (Streptococcus thermophilus (strain ATCC BAA-491 / LMD-9)).